Here is a 196-residue protein sequence, read N- to C-terminus: Mpv17-like protein (196 aa).

Residues 1-16 are Cytoplasmic-facing; sequence MAGWWPALSRAARRHP. The targeting to peroxisomes stretch occupies residues 16-55; the sequence is PWPTNVLLYGSLVSAGDALQQRLQGREANWRQTRRVATLV. A helical membrane pass occupies residues 17–34; it reads WPTNVLLYGSLVSAGDAL. Over 35-50 the chain is Lumenal; the sequence is QQRLQGREANWRQTRR. The chain crosses the membrane as a helical span at residues 51 to 67; sequence VATLVVTFHANFNYVWL. The Cytoplasmic portion of the chain corresponds to 68–90; sequence RLLERALPGRAPHALLAKLLCDQ. Residues 91-108 traverse the membrane as a helical segment; it reads VVGAPIAVSAFYVGMSIL. Over 109–150 the chain is Lumenal; that stretch reads QGKDDIFLDLKQKFWNTYLSGLMYWPFVQLTNFSLVPVQWRT. The chain crosses the membrane as a helical span at residues 151–167; sequence AYAGVCGFLWATFICFS. The Cytoplasmic segment spans residues 168–196; the sequence is QQSGDGTFKSAFTILYTKGTSATEGYPKK.

This sequence belongs to the peroxisomal membrane protein PXMP2/4 family. As to expression, isoform 1 is detected in the kidney (at protein level). Isoform 1 and isoform 2 are expressed in the kidney, heart, liver, lung, pancreas and skeletal muscle.

Its subcellular location is the peroxisome membrane. Functionally, participates in reactive oxygen species metabolism by up- or down-regulation of the genes of antioxidant enzymes. Protective against the mitochondrial apoptotic cascade. The sequence is that of Mpv17-like protein (MPV17L) from Homo sapiens (Human).